The sequence spans 184 residues: NADH-quinone oxidoreductase subunit B (184 aa).

Positions 37, 38, 103, and 132 each coordinate [4Fe-4S] cluster.

The protein belongs to the complex I 20 kDa subunit family. In terms of assembly, NDH-1 is composed of 14 different subunits. Subunits NuoB, C, D, E, F, and G constitute the peripheral sector of the complex. The cofactor is [4Fe-4S] cluster.

It is found in the cell membrane. It catalyses the reaction a quinone + NADH + 5 H(+)(in) = a quinol + NAD(+) + 4 H(+)(out). Its function is as follows. NDH-1 shuttles electrons from NADH, via FMN and iron-sulfur (Fe-S) centers, to quinones in the respiratory chain. The immediate electron acceptor for the enzyme in this species is believed to be a menaquinone. Couples the redox reaction to proton translocation (for every two electrons transferred, four hydrogen ions are translocated across the cytoplasmic membrane), and thus conserves the redox energy in a proton gradient. The polypeptide is NADH-quinone oxidoreductase subunit B (Mycolicibacterium smegmatis (strain ATCC 700084 / mc(2)155) (Mycobacterium smegmatis)).